The sequence spans 347 residues: Aspartate carbamoyltransferase catalytic subunit (347 aa).

Residues arginine 75 and threonine 76 each coordinate carbamoyl phosphate. Position 103 (lysine 103) interacts with L-aspartate. Carbamoyl phosphate contacts are provided by arginine 125, histidine 153, and glutamine 156. L-aspartate-binding residues include arginine 193 and arginine 247. Glycine 288 and proline 289 together coordinate carbamoyl phosphate.

Belongs to the aspartate/ornithine carbamoyltransferase superfamily. ATCase family. In terms of assembly, heterododecamer (2C3:3R2) of six catalytic PyrB chains organized as two trimers (C3), and six regulatory PyrI chains organized as three dimers (R2).

It catalyses the reaction carbamoyl phosphate + L-aspartate = N-carbamoyl-L-aspartate + phosphate + H(+). Its pathway is pyrimidine metabolism; UMP biosynthesis via de novo pathway; (S)-dihydroorotate from bicarbonate: step 2/3. Its function is as follows. Catalyzes the condensation of carbamoyl phosphate and aspartate to form carbamoyl aspartate and inorganic phosphate, the committed step in the de novo pyrimidine nucleotide biosynthesis pathway. This chain is Aspartate carbamoyltransferase catalytic subunit, found in Erythrobacter litoralis (strain HTCC2594).